The sequence spans 130 residues: Fluoride-specific ion channel FluC (130 aa).

Helical transmembrane passes span 3-23 (FVFLWAALGGAIGSSLRYFVG), 38-58 (LGTFSVNLIGCFVIGFMGHLA), 67-87 (FGIFFVTGVLGGFTTFSSYGL), and 102-122 (VSYVLGTNLLGLIGVAIGWFL). Na(+) is bound by residues Gly77 and Thr80.

Belongs to the fluoride channel Fluc/FEX (TC 1.A.43) family.

It is found in the cell inner membrane. The enzyme catalyses fluoride(in) = fluoride(out). Na(+) is not transported, but it plays an essential structural role and its presence is essential for fluoride channel function. Its function is as follows. Fluoride-specific ion channel. Important for reducing fluoride concentration in the cell, thus reducing its toxicity. This chain is Fluoride-specific ion channel FluC, found in Helicobacter pylori (strain HPAG1).